The sequence spans 63 residues: Keratin-associated protein 8-1 (63 aa).

The interval 12 to 54 is 12 X 2 AA repeats of G-[YCGS]; it reads PGCYWGSYGYPLGYSVGCGYGSTYSPVGYGFGYGYNGCGAFGY.

It belongs to the KRTAP type 8 family. As to quaternary structure, interacts with hair keratins. In terms of tissue distribution, is essentially restricted to only one vertical half of the hair forming compartment and in beard hairs is absent from the central medulla.

In terms of biological role, in the hair cortex, hair keratin intermediate filaments are embedded in an interfilamentous matrix, consisting of hair keratin-associated proteins (KRTAP), which are essential for the formation of a rigid and resistant hair shaft through their extensive disulfide bond cross-linking with abundant cysteine residues of hair keratins. The matrix proteins include the high-sulfur and high-glycine-tyrosine keratins. The chain is Keratin-associated protein 8-1 (KRTAP8-1) from Homo sapiens (Human).